Here is a 235-residue protein sequence, read N- to C-terminus: Small ribosomal subunit protein uS3 (235 aa).

Positions 39-107 constitute a KH type-2 domain; sequence IREILHKELK…DVVINIVEIR (69 aa). A disordered region spans residues 215-235; it reads QDKRMAESDGGGSSRPRRDAA.

This sequence belongs to the universal ribosomal protein uS3 family. Part of the 30S ribosomal subunit. Forms a tight complex with proteins S10 and S14.

Binds the lower part of the 30S subunit head. Binds mRNA in the 70S ribosome, positioning it for translation. The sequence is that of Small ribosomal subunit protein uS3 from Rhodopseudomonas palustris (strain TIE-1).